Consider the following 290-residue polypeptide: Nucleoid occlusion protein (290 aa).

The segment at residues 153 to 172 is a DNA-binding region (H-T-H motif); the sequence is EALAQRLGKGQSTIANKLRL.

The protein belongs to the ParB family.

Its subcellular location is the cytoplasm. It is found in the nucleoid. In terms of biological role, effects nucleoid occlusion by binding relatively nonspecifically to DNA and preventing the assembly of the division machinery in the vicinity of the nucleoid, especially under conditions that disturb the cell cycle. It helps to coordinate cell division and chromosome segregation by preventing the formation of the Z ring through the nucleoid, which would cause chromosome breakage. The polypeptide is Nucleoid occlusion protein (Bacillus anthracis (strain A0248)).